A 240-amino-acid chain; its full sequence is MKRRAVVLFSGGLDSTACLYWAKKQYDEVIMLTVNYGSNEERVTNKVAEYFSKELDVRLKIVKLDFLKEFSEIRGSSLVGGEVPRVTAEELEDIEKASETARSVWIPARNLVLISVAASLLDALGGGDIIVGFNAEEATTFPDNSREFVEKLNEALRFATLNPVKVVAPLIDLDKRGIAKLLKELNAKYEYSNSCYNPKGFTEDGRPIHCGECESCVRRHKGLIEGIGEDKTVYAITPRI.

ATP is bound at residue 9-19; that stretch reads FSGGLDSTACL. The Zn(2+) site is built by cysteine 195, cysteine 210, cysteine 213, and cysteine 216.

It belongs to the QueC family. The cofactor is Zn(2+).

The enzyme catalyses 7-carboxy-7-deazaguanine + NH4(+) + ATP = 7-cyano-7-deazaguanine + ADP + phosphate + H2O + H(+). It functions in the pathway purine metabolism; 7-cyano-7-deazaguanine biosynthesis. Its function is as follows. Catalyzes the ATP-dependent conversion of 7-carboxy-7-deazaguanine (CDG) to 7-cyano-7-deazaguanine (preQ(0)). The polypeptide is 7-cyano-7-deazaguanine synthase (Pyrococcus furiosus (strain ATCC 43587 / DSM 3638 / JCM 8422 / Vc1)).